Here is a 161-residue protein sequence, read N- to C-terminus: Regulator of ribonuclease activity A (161 aa).

It belongs to the RraA family. Homotrimer. Binds to both RNA-binding sites in the C-terminal region of Rne and to RhlB.

It is found in the cytoplasm. Its function is as follows. Globally modulates RNA abundance by binding to RNase E (Rne) and regulating its endonucleolytic activity. Can modulate Rne action in a substrate-dependent manner by altering the composition of the degradosome. Modulates RNA-binding and helicase activities of the degradosome. The chain is Regulator of ribonuclease activity A from Citrobacter koseri (strain ATCC BAA-895 / CDC 4225-83 / SGSC4696).